The primary structure comprises 441 residues: Cobyrinate a,c-diamide synthase (441 aa).

The GATase cobBQ-type domain maps to 243–434 (TVAVADDAAF…AHVHPESTAF (192 aa)). The active-site Nucleophile is C323.

The protein belongs to the CobB/CbiA family. It depends on Mg(2+) as a cofactor.

The catalysed reaction is cob(II)yrinate + 2 L-glutamine + 2 ATP + 2 H2O = cob(II)yrinate a,c diamide + 2 L-glutamate + 2 ADP + 2 phosphate + 2 H(+). It participates in cofactor biosynthesis; adenosylcobalamin biosynthesis; cob(II)yrinate a,c-diamide from sirohydrochlorin (anaerobic route): step 10/10. Functionally, catalyzes the ATP-dependent amidation of the two carboxylate groups at positions a and c of cobyrinate, using either L-glutamine or ammonia as the nitrogen source. This Halobacterium salinarum (strain ATCC 700922 / JCM 11081 / NRC-1) (Halobacterium halobium) protein is Cobyrinate a,c-diamide synthase.